Reading from the N-terminus, the 161-residue chain is Stress response protein YvgO (161 aa).

The signal sequence occupies residues 1–26 (MKRIRIPMTLALGAALTIAPLSFASA).

The sequence is that of Stress response protein YvgO (yvgO) from Bacillus subtilis (strain 168).